Here is a 182-residue protein sequence, read N- to C-terminus: Troponin I, fast skeletal muscle (182 aa).

G2 bears the N-acetylglycine mark. Residues 2–48 (GDEEKRNRAITARRQHLKSVMLQIAATELEKEESRREAEKQNYLAEH) are involved in binding TNC. A Phosphothreonine modification is found at T12. The interval 97–117 (NQKLFDLRGKFKRPPLRRVRM) is involved in binding TNC and actin. S118 carries the post-translational modification Phosphoserine.

Belongs to the troponin I family. Binds to actin and tropomyosin.

Troponin I is the inhibitory subunit of troponin, the thin filament regulatory complex which confers calcium-sensitivity to striated muscle actomyosin ATPase activity. In Homo sapiens (Human), this protein is Troponin I, fast skeletal muscle (TNNI2).